We begin with the raw amino-acid sequence, 894 residues long: Interleukin enhancer-binding factor 3 (894 aa).

Residues 5 to 378 (RIFVNDDRHV…PMKRPMEEDG (374 aa)) form the DZF domain. Positions 50 to 86 (DEQEKGSSEQAESDNMDVPPEDDSKEGAGEQKTEHMT) are disordered. Residues 60-73 (AESDNMDVPPEDDS) are compositionally biased toward acidic residues. Serine 62 is modified (phosphoserine). The span at 74–86 (KEGAGEQKTEHMT) shows a compositional bias: basic and acidic residues. Lysine 100 carries the N6-acetyllysine modification. Phosphothreonine; by PKR is present on threonine 188. Serine 190 carries the post-translational modification Phosphoserine. Lysine 297 participates in a covalent cross-link: Glycyl lysine isopeptide (Lys-Gly) (interchain with G-Cter in ubiquitin). Threonine 315 is subject to Phosphothreonine; by PKR. Lysine 348 is covalently cross-linked (Glycyl lysine isopeptide (Lys-Gly) (interchain with G-Cter in SUMO1)). The tract at residues 363–401 (TTYAITPMKRPMEEDGEEKSPSKKKKKIQKKEEKAEPPQ) is disordered. A Bipartite nuclear localization signal motif is present at residues 371 to 389 (KRPMEEDGEEKSPSKKKKK). Basic and acidic residues predominate over residues 372-383 (RPMEEDGEEKSP). Serine 382 and serine 384 each carry phosphoserine. Lysine 396 participates in a covalent cross-link: Glycyl lysine isopeptide (Lys-Gly) (interchain with G-Cter in SUMO2). Residues 398-467 (EPPQAMNALM…AVKVLQDMGL (70 aa)) enclose the DRBM 1 domain. Lysine 460 is modified (N6-acetyllysine). Positions 466-524 (GLPTGAEGRDSSKGEDSAEETEAKPAVVAPAPVVEAVSTPSAAFPSDATAEQGPILTKH) are disordered. The span at 472–481 (EGRDSSKGED) shows a compositional bias: basic and acidic residues. Residues serine 476, serine 477, and serine 482 each carry the phosphoserine modification. Lysine 489 participates in a covalent cross-link: Glycyl lysine isopeptide (Lys-Gly) (interchain with G-Cter in SUMO2). Over residues 489 to 508 (KPAVVAPAPVVEAVSTPSAA) the composition is skewed to low complexity. The DRBM 2 domain occupies 524–590 (HGKNPVMELN…ALAALEKLFP (67 aa)). At threonine 592 the chain carries Phosphothreonine. Residues 609 to 894 (RGGPKFAAKP…ADHSMNYQYR (286 aa)) are interaction with PRMT1. 2 disordered regions span residues 625–660 (MGGP…FGGA) and 718–894 (QGDN…YQYR). Residues 644-660 (RGGSIRGRGRGRGFGGA) show a composition bias toward gly residues. Composition is skewed to low complexity over residues 743–770 (PSYG…YGPP) and 777–792 (YNHG…SYNS). 4 positions are modified to phosphoserine: serine 792, serine 810, serine 812, and serine 816. 2 stretches are compositionally biased toward gly residues: residues 811 to 825 (GSGG…GSGG) and 832 to 851 (SHGG…GKQG). Positions 857–866 (NYNSPGSGQN) are enriched in polar residues. The span at 867 to 878 (YSGPPSSYQSSQ) shows a compositional bias: low complexity.

As to quaternary structure, identified in a IGF2BP1-dependent mRNP granule complex containing untranslated mRNAs. Interacts with FUS and SMN. Interacts (via C-terminus) with PRMT1. Forms a complex with ILF2. Can also bind to PRKDC/XRCC7: this may stabilize the interaction of PRKDC/XRCC7 and the heterodimeric complex of XRCC6/KU70 and XRCC5/KU80. Forms a heteromeric complex with ZNF346 and ILF3. Found in a nuclear export complex with XPO5, ILF3, Ran and double-stranded RNA or double-stranded minihelix VA1 RNA. Found in a nuclear export complex with XPO5, RAN, ILF3, ZNF346 and double-stranded RNA. Interacts with XPO5 and ZNF346. Forms a complex with ILF2, YLPM1, KHDRBS1, RBMX, NCOA5 and PPP1CA. Interacts with AGO1 and AGO2. Interacts with DHX36; this interaction occurs in a RNA-dependent manner. Interacts with ELAVL1; this interaction occurs in a RNA-dependent manner. Interacts with HAVCR2; this interaction promotes ILF3 ubiquitination and subsequent degradation. In terms of processing, phosphorylated at Thr-188 and Thr-315 by PKR in response to certain RNA viruses. This phosphorylation results in the dissociation of ILF2 from the ILF2-ILF3 complex resulting in a cytoplasmic sequestration of ILF3 where it can bind to viral RNAs and impede viral replication. Methylated by protein arginine N-methyltransferase 1. Post-translationally, ubiquitinated at Lys-297 in a TRIM47-dependent manner; this 'Lys-48'-linked ubiquitination promotes ILF3 degradation. In terms of tissue distribution, ubiquitous.

It localises to the nucleus. The protein localises to the nucleolus. Its subcellular location is the cytoplasm. RNA-binding protein that plays an essential role in the biogenesis of circular RNAs (circRNAs) which are produced by back-splicing circularization of pre-mRNAs. Within the nucleus, promotes circRNAs processing by stabilizing the regulatory elements residing in the flanking introns of the circularized exons. Plays thereby a role in the back-splicing of a subset of circRNAs. As a consequence, participates in a wide range of transcriptional and post-transcriptional processes. Binds to poly-U elements and AU-rich elements (AREs) in the 3'-UTR of target mRNAs. Upon viral infection, ILF3 accumulates in the cytoplasm and participates in the innate antiviral response. Mechanistically, ILF3 becomes phosphorylated and activated by the double-stranded RNA-activated protein kinase/PKR which releases ILF3 from cellular mature circRNAs. In turn, unbound ILF3 molecules are able to interact with and thus inhibit viral mRNAs. Functionally, (Microbial infection) Plays a positive role in HIV-1 virus production by binding to and thereby stabilizing HIV-1 RNA, together with ILF3. In Homo sapiens (Human), this protein is Interleukin enhancer-binding factor 3 (ILF3).